Reading from the N-terminus, the 381-residue chain is Alkanesulfonate monooxygenase (381 aa).

This sequence belongs to the SsuD family. As to quaternary structure, homotetramer.

It catalyses the reaction an alkanesulfonate + FMNH2 + O2 = an aldehyde + FMN + sulfite + H2O + 2 H(+). Functionally, catalyzes the desulfonation of aliphatic sulfonates. The chain is Alkanesulfonate monooxygenase from Escherichia coli O6:H1 (strain CFT073 / ATCC 700928 / UPEC).